We begin with the raw amino-acid sequence, 454 residues long: Inactive tetrahydroanabasine acetyltransferase pauper allele (454 aa).

Belongs to the plant acyltransferase family. Monomer.

This chain is Inactive tetrahydroanabasine acetyltransferase pauper allele, found in Lupinus albus (White lupine).